The chain runs to 363 residues: MSPSTINPESSPLHTYYFSMVEMSIMKLFLDHKIFTLIPTTPGASIPVTTLTTTLNASPSLLTRLTNFLIASGVLSSPQPGHIAHTPKSLQFTDPTSYQALFFAHIFDFFLVPAVKWPGYMAEHGLNEPTSASRTPFGYAAGYPDKTLYEILETMPKRAAQFNATMAASFQPMPVLGMYDFSWIEKLADEERMAIVDVGGGKGQALKEILGAYPGIRPEQCVLFDVDDVIREAVAEAERDDDETWRTVRKIPGSFFSEQPVKGAAVYHIRRVLNDWPDEDCVTILRRIRDAAAPNSRVLISEQILQEEPSLAVAALDLWMLNFGGKRRSEGMFGELAQRTGWKVNGVFRDKESDTGVVELVVA.

Residues 199-200 (GG), aspartate 225, 254-255 (SF), arginine 270, and arginine 271 contribute to the S-adenosyl-L-methionine site.

The protein belongs to the class I-like SAM-binding methyltransferase superfamily. Cation-independent O-methyltransferase family.

The protein operates within secondary metabolite biosynthesis. Methyltransferase; part of the gene cluster that mediates the biosynthesis of pyranonigrins, a family of antioxidative compounds. The first step of pyranonigrins biosynthesis is performed by the hybrid PKS-NRPS synthetase that condenses 6 malonyl-CoA units to an acetyl starter unit, to form a 1,3,5-trioxotetradecane-6,8-dienyl-ACP. The enoyl reductase (ER) domain of pynA is likely to be functional during the first two rounds of polyketide chain extension, to generate the saturated C-C bonds of the alkyl side chain. PynA subsequently forms the amide bond between the acyl chain and L-serine. Although pynA has a terminal reductase domain, it appears to require the thioesterase pynI for the release of the straight-chain intermediate from pynA via the formation of a tetramic acid pyranonigrin J. The methyltransferase pynC then coverts pyranonigrin J to pyranonigrin I via N-methylation. The FAD-dependent monooxygenase pynG catalyzes an epoxidation-mediated cyclization to form the dihydro-gamma-pyrone moiety, followed by pynD-catalyzed oxidation of the alcohol to the ketone and enolization to yield the characteristic tetramic acid-fused gamma-pyrone core of pyranonigrin H. Pyranonigrin H is substrate of pynH for dehydration-mediated exo-methylene formation from the serine side chain to produce pyranonigrin E, before the oxidase pynE reduces the exo-methylene of pyranonigrin E into a pendant methyl to form pyranonigrin G. The FAD-linked oxidoreductase pynB performs the reverse reaction and converts pyranonigrin G back to pyranonigrin E. The chain is Methyltransferase pynC from Aspergillus niger (strain ATCC MYA-4892 / CBS 513.88 / FGSC A1513).